A 55-amino-acid polypeptide reads, in one-letter code: Large ribosomal subunit protein bL32 (55 aa).

Positions 1 to 19 (MAVPKRRMSRANTHSRRSQ) are enriched in basic residues. The segment at 1-20 (MAVPKRRMSRANTHSRRSQW) is disordered.

Belongs to the bacterial ribosomal protein bL32 family.

The sequence is that of Large ribosomal subunit protein bL32 from Corynebacterium jeikeium (strain K411).